Here is a 382-residue protein sequence, read N- to C-terminus: Protein farnesyltransferase subunit beta (382 aa).

PFTB repeat units follow at residues 78 to 119 (CERA…CLCD), 129 to 170 (RDRL…SLVG), 178 to 219 (FEGT…ALLG), 226 to 268 (EIKL…VIVA), and 286 to 328 (PEKL…SSIA). Residues 204 to 207 (HGGY) and 247 to 250 (RSNK) each bind (2E,6E)-farnesyl diphosphate. Zn(2+)-binding residues include D253 and C255. Residue 256 to 259 (YSWW) participates in (2E,6E)-farnesyl diphosphate binding. H316 serves as a coordination point for Zn(2+).

Belongs to the protein prenyltransferase subunit beta family. Heterodimer of an alpha(cwp1) and a beta(cpp1) subunit. It depends on Zn(2+) as a cofactor.

It catalyses the reaction L-cysteinyl-[protein] + (2E,6E)-farnesyl diphosphate = S-(2E,6E)-farnesyl-L-cysteinyl-[protein] + diphosphate. Functionally, catalyzes the transfer of a farnesyl moiety from farnesyl diphosphate to a cysteine at the fourth position from the C-terminus of several proteins. The beta(cpp1) subunit is responsible for peptide-binding. The protein is Protein farnesyltransferase subunit beta (cpp1) of Schizosaccharomyces pombe (strain 972 / ATCC 24843) (Fission yeast).